Here is a 215-residue protein sequence, read N- to C-terminus: N-(5'-phosphoribosyl)anthranilate isomerase (215 aa).

Belongs to the TrpF family.

It catalyses the reaction N-(5-phospho-beta-D-ribosyl)anthranilate = 1-(2-carboxyphenylamino)-1-deoxy-D-ribulose 5-phosphate. It participates in amino-acid biosynthesis; L-tryptophan biosynthesis; L-tryptophan from chorismate: step 3/5. This chain is N-(5'-phosphoribosyl)anthranilate isomerase, found in Rhizobium meliloti (strain 1021) (Ensifer meliloti).